The primary structure comprises 389 residues: Chorismate synthase (389 aa).

Positions 41 and 47 each coordinate NADP(+). Residues 129 to 131, 247 to 248, glycine 291, 306 to 310, and arginine 332 each bind FMN; these read RSS, NA, and KPIST.

This sequence belongs to the chorismate synthase family. In terms of assembly, homotetramer. FMNH2 serves as cofactor.

The catalysed reaction is 5-O-(1-carboxyvinyl)-3-phosphoshikimate = chorismate + phosphate. It functions in the pathway metabolic intermediate biosynthesis; chorismate biosynthesis; chorismate from D-erythrose 4-phosphate and phosphoenolpyruvate: step 7/7. In terms of biological role, catalyzes the anti-1,4-elimination of the C-3 phosphate and the C-6 proR hydrogen from 5-enolpyruvylshikimate-3-phosphate (EPSP) to yield chorismate, which is the branch point compound that serves as the starting substrate for the three terminal pathways of aromatic amino acid biosynthesis. This reaction introduces a second double bond into the aromatic ring system. In Rubrobacter xylanophilus (strain DSM 9941 / JCM 11954 / NBRC 16129 / PRD-1), this protein is Chorismate synthase.